The primary structure comprises 1051 residues: Eukaryotic translation initiation factor 3 subunit A (1051 aa).

A coiled-coil region spans residues 92-121; that stretch reads LKKFIELAEKKVTEAQAKADEIQSSLESAA. The 185-residue stretch at 339 to 523 folds into the PCI domain; that stretch reads MTKAASFVLL…GVLTFDTDIF (185 aa). Residues 608–905 are a coiled coil; it reads RVLIEKKKEA…EAEARRAARK (298 aa). Composition is skewed to basic and acidic residues over residues 617 to 632, 642 to 664, 794 to 901, and 916 to 926; these read AATDALQRKQREEETR, EAEKQRLLDEQREREKKRLRDEQ, KEVS…EARR, and AELERPVERTA. 2 disordered regions span residues 617–664 and 794–1051; these read AATD…RDEQ and KEVS…QQQQ. Low complexity-rich tracts occupy residues 948–961 and 1010–1039; these read KEAAGAAPAPAAAE and SSSSQPPSRTQTPPAAAPASSDKPEASPAP.

This sequence belongs to the eIF-3 subunit A family. As to quaternary structure, component of the eukaryotic translation initiation factor 3 (eIF-3) complex.

It localises to the cytoplasm. Its function is as follows. RNA-binding component of the eukaryotic translation initiation factor 3 (eIF-3) complex, which is involved in protein synthesis of a specialized repertoire of mRNAs and, together with other initiation factors, stimulates binding of mRNA and methionyl-tRNAi to the 40S ribosome. The eIF-3 complex specifically targets and initiates translation of a subset of mRNAs involved in cell proliferation. The protein is Eukaryotic translation initiation factor 3 subunit A (tif32) of Aspergillus fumigatus (strain CBS 144.89 / FGSC A1163 / CEA10) (Neosartorya fumigata).